Consider the following 342-residue polypeptide: AA9 family lytic polysaccharide monooxygenase H (342 aa).

A signal peptide spans Met-1 to Ala-19. Cu(2+) is bound by residues His-20 and His-106. 2 disulfides stabilise this stretch: Cys-75-Cys-195 and Cys-117-Cys-121. O2-binding residues include His-181 and Gln-190. Tyr-192 is a Cu(2+) binding site. The interval Ala-263–Gln-308 is disordered. A compositionally biased stretch (low complexity) spans Asn-272–Gly-305. The 37-residue stretch at Asp-306 to Leu-342 folds into the CBM1 domain.

Belongs to the polysaccharide monooxygenase AA9 family. Cu(2+) is required as a cofactor.

The protein resides in the secreted. It catalyses the reaction [(1-&gt;4)-beta-D-glucosyl]n+m + reduced acceptor + O2 = 4-dehydro-beta-D-glucosyl-[(1-&gt;4)-beta-D-glucosyl]n-1 + [(1-&gt;4)-beta-D-glucosyl]m + acceptor + H2O.. With respect to regulation, the presence of lignin presents a significant source of antioxidants, which probably increase the activity by trapping liberated oxidized fragments. Its function is as follows. Lytic polysaccharide monooxygenase (LPMO) that depolymerizes crystalline and amorphous polysaccharides via the oxidation of scissile alpha- or beta-(1-4)-glycosidic bonds, yielding C1 or C4 oxidation products. Catalysis by LPMOs requires the reduction of the active-site copper from Cu(II) to Cu(I) by a reducing agent and H(2)O(2) or O(2) as a cosubstrate. Hydrolyzes weakly barley beta-glucan, carboxymethyl cellulose, lichenan, wheat arabinoxylan and birchwood xylan. Stimulates the hydrolysis of lignocellulosic substrates (such as hydrothermal pretreated wheat straw or steam-pretreated spruce), when combined with other cellulolytic enzymes. The chain is AA9 family lytic polysaccharide monooxygenase H from Thermothelomyces thermophilus (strain ATCC 42464 / BCRC 31852 / DSM 1799) (Sporotrichum thermophile).